A 686-amino-acid polypeptide reads, in one-letter code: WD repeat-containing protein 93 (686 aa).

The segment covering 1–10 (MSFPRGSQTQ) has biased composition (polar residues). Residues 1–40 (MSFPRGSQTQKIKHPIGTRKGPLEVPPPTEKDWPKDDEQD) form a disordered region. Over residues 29–40 (TEKDWPKDDEQD) the composition is skewed to basic and acidic residues. One copy of the WD repeat lies at 410 to 449 (PCAAPIAVSQLSCSSSYLVLACEDGVLTLWDLAKGFPLGV).

This chain is WD repeat-containing protein 93 (WDR93), found in Homo sapiens (Human).